The sequence spans 300 residues: GTPase Era (300 aa).

Residues 8-176 (RCGYVAIVGR…ERLVAGRLPQ (169 aa)) form the Era-type G domain. The tract at residues 16–23 (GRPNVGKS) is G1. 16–23 (GRPNVGKS) provides a ligand contact to GTP. The segment at 42 to 46 (QTTRH) is G2. The segment at 63-66 (DTPG) is G3. GTP-binding positions include 63 to 67 (DTPGL) and 125 to 128 (NKAD). The segment at 125-128 (NKAD) is G4. Positions 155–157 (ISA) are G5. Residues 199 to 283 (VREKIMRQLG…MLNLWVKVKG (85 aa)) form the KH type-2 domain.

The protein belongs to the TRAFAC class TrmE-Era-EngA-EngB-Septin-like GTPase superfamily. Era GTPase family. As to quaternary structure, monomer.

Its subcellular location is the cytoplasm. The protein resides in the cell inner membrane. An essential GTPase that binds both GDP and GTP, with rapid nucleotide exchange. Plays a role in 16S rRNA processing and 30S ribosomal subunit biogenesis and possibly also in cell cycle regulation and energy metabolism. The polypeptide is GTPase Era (Azotobacter vinelandii (strain DJ / ATCC BAA-1303)).